Reading from the N-terminus, the 428-residue chain is Cytochrome P450-terp (428 aa).

Heme is bound at residue C377.

The protein belongs to the cytochrome P450 family. Heme is required as a cofactor.

Its subcellular location is the cytoplasm. Its function is as follows. Catalyzes the hydroxylation of alpha-terpineol. The polypeptide is Cytochrome P450-terp (cyp108) (Pseudomonas sp).